Consider the following 613-residue polypeptide: Activating transcription factor 3 (613 aa).

Disordered stretches follow at residues 77-115 and 133-218; these read RHFN…PSVQ and KRKL…NKIA. Residues 85–105 show a composition bias toward low complexity; that stretch reads GQSHSQDSSHSSCSGSPLDSP. A compositionally biased stretch (polar residues) spans 138 to 147; sequence TCDSSSGSEQ. The span at 158-175 shows a compositional bias: low complexity; the sequence is NHNGHSGSSNNYSGSMSN. A compositionally biased stretch (acidic residues) spans 178–191; it reads DLDDDCEESSDDDS. One can recognise a bZIP domain in the interval 205–268; sequence EDRRRRRRER…QKLVDMLKSH (64 aa). Residues 207–229 form a basic motif region; it reads RRRRRRERNKIAATKCRMKKRER. Residues 233–261 are leucine-zipper; it reads LIKESEVLDTQNVELKNQVRQLETERQKL. Residues 337–446 form a disordered region; that stretch reads PNGYCKPSPS…SSNATSSTTP (110 aa). The segment covering 356–368 has biased composition (low complexity); that stretch reads QQQQQQQQQQQPQ. Residues 369–389 are compositionally biased toward polar residues; it reads SLNPAGNNVIDQQHANPSPSL. The segment covering 402-446 has biased composition (low complexity); sequence GSASNHPSHNNNNNNNNSSGASSNTSNNNSNISSHSSNATSSTTP.

Belongs to the bZIP family. ATF subfamily. As to quaternary structure, interacts with Jra/jun; the interaction enhances the DNA-binding activity of Atf3. In terms of tissue distribution, moderate expression in some regions of the larval nervous system, the ring gland and imaginal disks. High expression in larval gut, excretory malpighian tubules, salivary glands, and, to a lesser extent, the fat body where levels are approximately 2.5-fold less than the gut.

The protein resides in the nucleus. Transcription factor which binds to the cAMP response element (CRE). Regulates metabolic and innate immune homeostasis, possibly by controlling appropriate expression of genes involved in peritrophic matrix composition and ensuring the normal digestive and immune function of the gut. Required for the expression of odorant receptors Or43b and Or47b. The polypeptide is Activating transcription factor 3 (Drosophila melanogaster (Fruit fly)).